A 488-amino-acid polypeptide reads, in one-letter code: Stress activated transcription factor atfs-1 (488 aa).

The transit peptide at 1 to 23 directs the protein to the mitochondrion; it reads MFSRVGRLTTFGAQAVSNCPFRR. Positions 138 to 191 are disordered; that stretch reads SWQNGSSVGHPHGHQQQQQTCQQPPTHSSTTETMHDFSNFGDNMGSPLFQSPSK. Over residues 142 to 168 the composition is skewed to low complexity; sequence GSSVGHPHGHQQQQQTCQQPPTHSSTT. Residue lysine 342 forms a Glycyl lysine isopeptide (Lys-Gly) (interchain with G-Cter in smo-1) linkage. The disordered stretch occupies residues 353–400; that stretch reads QRDDDDEDYIPASEARRTSSRLNRKSATPTYLRRRDSERSWTPASDDY. In terms of domain architecture, bZIP spans 420–483; sequence DEETDRRRML…NSMKKELRKM (64 aa). The segment at 425 to 460 is basic motif; the sequence is RRRMLNRIAAVRYREKKRAEKKGRKMEFQEVADRNR. Positions 436-441 match the Nuclear localization signal motif; it reads RYREKK. The leucine-zipper stretch occupies residues 462-469; that stretch reads LLQKERQL.

It belongs to the bZIP family. May be desumoylated by ulp-4. Ubiquitously expressed.

Its subcellular location is the mitochondrion matrix. It localises to the cytoplasm. The protein localises to the nucleus. Functionally, acts as a transcription factor during mitochondrial stress by activating the mitochondrial unfolded protein response (mtUPR). Induces nuclear and mitochondrial gene transcription, including genes coding for mitochondrial chaperones and proteins involved in glycolysis, amino acid catabolism and innate immunity. Following mitochondrial stress, restores mitochondrial respiratory capacity by limiting the transcription of oxidative phosphorylation (OXPHOS) machinery genes and by promoting the assembly of OXPHOS complexes via the up-regulation of chaperone and assembly factor genes. Component of a feedback loop involving atfs-1, atgl-1 and hlh-11. Acts together with flp-7 to negatively regulate the expression of the transcription regulator hlh-11, to promote expression of atgl-1, and thus atgl-1-dependent fat oxidation in response to mitochondrial stress. In addition, functions with hlh-11 to maintain lifespan. Promotes mtDNA maintenance and propagation of deleterious mtDNA. The sequence is that of Stress activated transcription factor atfs-1 from Caenorhabditis elegans.